Here is a 211-residue protein sequence, read N- to C-terminus: Claudin-7 (211 aa).

Residues 1-7 (MANSGLQ) are Cytoplasmic-facing. The chain crosses the membrane as a helical span at residues 8-28 (LLGFSMAMLGWVGLIASTAIP). Over 29 to 81 (QWQMSSYAGDNIITAQAMYKGLWMECVTQSTGMMSCKMYDSVLALPAATQATR) the chain is Extracellular. Residues 82–102 (ALMIVSLVLGFLAMFVATMGM) form a helical membrane-spanning segment. Topologically, residues 103-119 (KCTRCGGDDKVKKARIA) are cytoplasmic. Residues 120–140 (MTGGIIFIVAGLAALVACSWI) traverse the membrane as a helical segment. Topologically, residues 141–160 (GHQIVTDFYNPLTPMNIKYE) are extracellular. Residues 161-181 (FGPAIFIGWAGSALVLLGGAL) form a helical membrane-spanning segment. Residues 182 to 211 (LSCSCPGSESKAAYRAPRSYPKSNSSKEYV) are Cytoplasmic-facing. Residues 210-211 (YV) form an interactions with TJP1, TJP2 and TJP3 region.

Belongs to the claudin family. Directly interacts with TJP1/ZO-1, TJP2/ZO-2 and TJP3/ZO-3. The phosphorylated form interacts with EPCAM. In terms of processing, phosphorylated.

The protein resides in the cell membrane. It is found in the basolateral cell membrane. The protein localises to the cell junction. It localises to the tight junction. Functionally, plays a major role in tight junction-specific obliteration of the intercellular space. This chain is Claudin-7 (Cldn7), found in Rattus norvegicus (Rat).